The following is a 344-amino-acid chain: MEERILQAKQEILEAPLTTLAELESFRLHFTVRKGLVAALFGELKNVASADKPRIGQLLNELKQTAESRVSDAEAHLAAAQNSKQQPSLLDLTLPGRRSFCGSEHPVQKVLGDMKSIFNAMGFTIATGPELEVGNYNFDMLNFAPDHPARDMQDTFFVRTGSGNTPDVLLRTHTSPVQIRVMLDEKPPIRVICPGKVYRNEAISARSYCVFHQLEGLYIDKNVSFADLKATIYSFAQQMFGSDVKLRFRPSFFPFTEPSAEVDVTCYLCGGKGCRVCKKSGWLEILGCGMVHPNVLRNCGIDPEEWSGYAFGMGVDRTVLLRYKIDDIRLLFENDVRMLQQFKA.

Glu257 contributes to the Mg(2+) binding site.

The protein belongs to the class-II aminoacyl-tRNA synthetase family. Phe-tRNA synthetase alpha subunit type 1 subfamily. Tetramer of two alpha and two beta subunits. Mg(2+) serves as cofactor.

It is found in the cytoplasm. The catalysed reaction is tRNA(Phe) + L-phenylalanine + ATP = L-phenylalanyl-tRNA(Phe) + AMP + diphosphate + H(+). The chain is Phenylalanine--tRNA ligase alpha subunit from Chlorobium chlorochromatii (strain CaD3).